We begin with the raw amino-acid sequence, 472 residues long: 3-isopropylmalate dehydratase large subunit (472 aa).

Positions 352, 413, and 416 each coordinate [4Fe-4S] cluster.

Belongs to the aconitase/IPM isomerase family. LeuC type 1 subfamily. In terms of assembly, heterodimer of LeuC and LeuD. It depends on [4Fe-4S] cluster as a cofactor.

The catalysed reaction is (2R,3S)-3-isopropylmalate = (2S)-2-isopropylmalate. It functions in the pathway amino-acid biosynthesis; L-leucine biosynthesis; L-leucine from 3-methyl-2-oxobutanoate: step 2/4. Catalyzes the isomerization between 2-isopropylmalate and 3-isopropylmalate, via the formation of 2-isopropylmaleate. The sequence is that of 3-isopropylmalate dehydratase large subunit from Laribacter hongkongensis (strain HLHK9).